A 4981-amino-acid chain; its full sequence is Protocadherin Fat 4 (4981 aa).

Positions 1 to 42 (MNLAANRAPGRRRLPLPSPSLCQLLRVWGLLSLLPGSARVQA) are cleaved as a signal peptide. Residues 43-4505 (AEQRQVFQVM…PDEISLPLWA (4463 aa)) are Extracellular-facing. Cadherin domains lie at 44-135 (EQRQ…APVF), 136-250 (PDPS…PPVF), 251-353 (GSSH…DPVV), 359-475 (PATS…PPVF), 476-582 (EQQV…KPVF), 584-689 (QPEG…SPVF), 690-793 (YPVQ…PPVF), 794-893 (SQAA…APHF), 894-996 (LQAV…PPVF), 997-1100 (DQIS…RPLF), 1101-1210 (NSTN…APKF), 1211-1315 (LKDF…TPSF), 1316-1420 (PKST…PPSF), 1421-1529 (PPGD…VPMF), 1529-1629 (FISQ…GPVF), 1630-1740 (TQTK…PPVF), 1741-1841 (PTDT…TPRF), 1842-1944 (SRPV…PPVF), 1945-2051 (SMSS…PPMF), 2051-2154 (FLSP…NPVF), 2155-2259 (AQAM…VPVF), 2260-2364 (ELSP…VPTF), 2365-2468 (ANNM…PPRF), 2469-2569 (QHHP…FPKV), 2570-2671 (RAKE…APTF), 2672-2775 (EEDP…APRF), 2775-2874 (FSQI…TPRF), 2875-2985 (SRPS…PPQF), 2986-3091 (LQNK…TPEF), 3092-3196 (SQNH…SPVF), 3197-3300 (VPDE…VPRF), 3301-3406 (VSKL…PPVF), 3407-3512 (SLST…GPVL), and 3511-3622 (VLTV…VEIF). Asn84 and Asn237 each carry an N-linked (GlcNAc...) asparagine glycan. N-linked (GlcNAc...) asparagine glycosylation is found at Asn393, Asn416, Asn435, Asn483, Asn551, Asn615, Asn676, Asn721, Asn825, Asn880, Asn948, Asn1085, Asn1101, Asn1104, Asn1225, Asn1296, Asn1389, and Asn1514. 4 N-linked (GlcNAc...) asparagine glycosylation sites follow: Asn1828, Asn1899, Asn1967, and Asn2119. 2 N-linked (GlcNAc...) asparagine glycosylation sites follow: Asn2387 and Asn2432. Residues Asn2923, Asn2939, Asn3038, Asn3142, Asn3219, Asn3394, and Asn3479 are each glycosylated (N-linked (GlcNAc...) asparagine). N-linked (GlcNAc...) asparagine glycosylation is found at Asn3708 and Asn3760. The EGF-like 1 domain occupies 3804–3862 (DHDPCIHGPCQNGGSCLRRLAVGSALKIQESLPVIIVANEPLQPSQCKCVPGYAGSWCE). 12 disulfide bridges follow: Cys3808–Cys3819, Cys3813–Cys3850, Cys3852–Cys3861, Cys3868–Cys3879, Cys3873–Cys3888, Cys3890–Cys3899, Cys3906–Cys3917, Cys3911–Cys3926, Cys3928–Cys3937, Cys3944–Cys3955, Cys3949–Cys3964, and Cys3966–Cys3975. The EGF-like 2; calcium-binding domain occupies 3864-3900 (DIDECLPAPCHNGGTCHNLVGGFSCSCPEGFTGRACE). Residues 3902–3938 (DINECLPSPCKHGAVCQNFPGGFNCVCKTGYTGKMCE) enclose the EGF-like 3; calcium-binding domain. One can recognise an EGF-like 4 domain in the interval 3940–3976 (SVNYCECNPCFNGGSCQSGVESYYCHCPFGVFGKHCE). The Laminin G-like 1 domain occupies 3977 to 4161 (LNSYGFEELS…LAAQGILDQC (185 aa)). The N-linked (GlcNAc...) asparagine glycan is linked to Asn4019. Intrachain disulfides connect Cys4135/Cys4161, Cys4168/Cys4179, Cys4173/Cys4188, and Cys4190/Cys4199. Residues 4164 to 4200 (LEGTCARNPCQHGGTCVDFWSWQQCQCMEGLTGKYCE) form the EGF-like 5 domain. One can recognise a Laminin G-like 2 domain in the interval 4219-4399 (YHMSQSEKRE…KTDPSVKIGC (181 aa)). N-linked (GlcNAc...) asparagine glycosylation is found at Asn4269 and Asn4314. 4 disulfides stabilise this stretch: Cys4366/Cys4399, Cys4431/Cys4442, Cys4436/Cys4452, and Cys4454/Cys4463. Positions 4427–4464 (PPGDCASHPCQNGGSCEPGLLSGYTCSCPESHTGRTCE) constitute an EGF-like 6 domain. Residues 4506–4526 (VPAIVGSCATALALLVLSLIL) form a helical membrane-spanning segment. The Cytoplasmic portion of the chain corresponds to 4527–4981 (CNQCRGKMPK…AKDGEAEQYV (455 aa)). Disordered regions lie at residues 4535-4585 (PKNP…PDII), 4677-4713 (PSSY…KPSA), 4753-4773 (RRSK…SRLK), 4796-4911 (RLNT…PAAA), and 4957-4981 (AAGN…EQYV). Over residues 4677-4701 (PSSYGQGLRTSSLSHSACPTPNPLS) the composition is skewed to polar residues. The interval 4708–4797 (FSKPSAFYRN…GLSIEEVERL (90 aa)) is necessary and sufficient for interaction with MPDZ. Positions 4811–4823 (DHGRSSSEEDCRR) are enriched in basic and acidic residues. Position 4878 is a phosphoserine (Ser4878). Over residues 4971 to 4981 (AAKDGEAEQYV) the composition is skewed to basic and acidic residues.

As to quaternary structure, heterophilic interaction with DCHS1; this interaction affects their respective protein levels. Interacts (via cytoplasmic domain) with MPDZ. Forms a complex with PALS1 and MPDZ. As to expression, widely expressed.

It localises to the membrane. Functionally, cadherins are cell-cell interaction molecules. FAT4 plays a role in the maintenance of planar cell polarity as well as in inhibition of YAP1-mediated neuroprogenitor cell proliferation and differentiation. The polypeptide is Protocadherin Fat 4 (Fat4) (Mus musculus (Mouse)).